We begin with the raw amino-acid sequence, 123 residues long: MPTIKQLIRNARQPIRNVTKSPALRGCPQRRGTCTRVYTITPKKPNSALRKVARVRLTSGFEITAYIPGIGHNLQEHSVVLVRGGRVKDLPGVRYHIVRGTLDAVGVKDRQQGRSKYGVKKPK.

Belongs to the universal ribosomal protein uS12 family. In terms of assembly, part of the 30S ribosomal subunit.

Its subcellular location is the plastid. The protein localises to the chloroplast. Its function is as follows. With S4 and S5 plays an important role in translational accuracy. Located at the interface of the 30S and 50S subunits. This is Small ribosomal subunit protein uS12cz/uS12cy (rps12-A) from Coffea arabica (Arabian coffee).